The following is a 312-amino-acid chain: Small ribosomal subunit protein uS2 (312 aa).

This sequence belongs to the universal ribosomal protein uS2 family.

The sequence is that of Small ribosomal subunit protein uS2 from Ruthia magnifica subsp. Calyptogena magnifica.